We begin with the raw amino-acid sequence, 183 residues long: TATA-box-binding protein (183 aa).

2 tandem repeats follow at residues 8–84 and 99–175.

Belongs to the TBP family.

General factor that plays a role in the activation of archaeal genes transcribed by RNA polymerase. Binds specifically to the TATA box promoter element which lies close to the position of transcription initiation. The polypeptide is TATA-box-binding protein (Methanosphaera stadtmanae (strain ATCC 43021 / DSM 3091 / JCM 11832 / MCB-3)).